Reading from the N-terminus, the 348-residue chain is MNGTEGPDFYIPMSNQTGVVRSPFEYPQYYLAEPWQFSMLAAYMFLLIVLGFPINFLTLYVTVQHKKLRTPLNYILLNLAVADLFMVLGGFTTTLYTSLHGYFVFGPTGCNVEGFFATLGGEIALWSLVVLAIERYVVVCKPMSNFRFGENHAIMGVAFTWIMALACAAPPLVGWSRYIPEGMQCSCGIDYYTLKPEVNNESFVIYMFVVHFTIPLIIIFFCYGQLVFTVKEAAAQQQESATTQKAEKEVTRMVIIMVIAFLICWVPYASVAFYIFTHQGSNFGPIFMTIPAFFAKSSSIYNPVIYIMMNKQFRNCMLTTICCGKNPLGDDEASATASKTETSQVAPA.

M1 carries the N-acetylmethionine modification. Over 1-36 the chain is Extracellular; sequence MNGTEGPDFYIPMSNQTGVVRSPFEYPQYYLAEPWQ. N-linked (GlcNAc...) asparagine glycans are attached at residues N2 and N15. Residues 37 to 61 traverse the membrane as a helical segment; the sequence is FSMLAAYMFLLIVLGFPINFLTLYV. At 62–73 the chain is on the cytoplasmic side; sequence TVQHKKLRTPLN. The helical transmembrane segment at 74–96 threads the bilayer; the sequence is YILLNLAVADLFMVLGGFTTTLY. The Extracellular segment spans residues 97–110; the sequence is TSLHGYFVFGPTGC. A disulfide bridge links C110 with C187. The helical transmembrane segment at 111 to 133 threads the bilayer; sequence NVEGFFATLGGEIALWSLVVLAI. Residues 134 to 136 carry the 'Ionic lock' involved in activated form stabilization motif; that stretch reads ERY. Topologically, residues 134–152 are cytoplasmic; that stretch reads ERYVVVCKPMSNFRFGENH. The helical transmembrane segment at 153-173 threads the bilayer; the sequence is AIMGVAFTWIMALACAAPPLV. At 174–202 the chain is on the extracellular side; it reads GWSRYIPEGMQCSCGIDYYTLKPEVNNES. E201 contacts Zn(2+). The chain crosses the membrane as a helical span at residues 203–224; that stretch reads FVIYMFVVHFTIPLIIIFFCYG. The Cytoplasmic portion of the chain corresponds to 225-252; the sequence is QLVFTVKEAAAQQQESATTQKAEKEVTR. Residues 253–274 traverse the membrane as a helical segment; that stretch reads MVIIMVIAFLICWVPYASVAFY. Residues 275 to 286 are Extracellular-facing; the sequence is IFTHQGSNFGPI. Q279 contributes to the Zn(2+) binding site. The helical transmembrane segment at 287–308 threads the bilayer; sequence FMTIPAFFAKSSSIYNPVIYIM. K296 carries the N6-(retinylidene)lysine modification. At 309 to 348 the chain is on the cytoplasmic side; it reads MNKQFRNCMLTTICCGKNPLGDDEASATASKTETSQVAPA. 2 S-palmitoyl cysteine lipidation sites follow: C322 and C323. An interaction with SAG region spans residues 330 to 348; the sequence is DDEASATASKTETSQVAPA. Residue S334 is modified to Phosphoserine. T336 carries the phosphothreonine modification. S338 is modified (phosphoserine). Phosphothreonine occurs at positions 340 and 342. S343 is subject to Phosphoserine.

Belongs to the G-protein coupled receptor 1 family. Opsin subfamily. Homodimer. May form a complex composed of RHO, GRK1 and RCVRN in a Ca(2+)-dependent manner; RCVRN prevents the interaction between GRK1 and RHO. Interacts with GRK1. Interacts (phosphorylated form) with SAG. Interacts with GNAT1. Interacts with GNAT3. SAG and G-proteins compete for a common binding site. Interacts with PRCD; the interaction promotes PRCD stability. Forms a complex with ASAP1 and ARF4. Forms a complex with ASAP1, RAB11A, Rabin8/RAB3IP, ARF4 and RAB11FIP3; the complex regulates Golgi-to-cilia rhodopsin/RHO transport in photoreceptors. Phosphorylated on some or all of the serine and threonine residues present in the C-terminal region. In terms of processing, contains one covalently linked retinal chromophore. Upon light absorption, the covalently bound 11-cis-retinal is converted to all-trans-retinal. After hydrolysis of the Schiff base and release of the covalently bound all-trans-retinal, active rhodopsin is regenerated by binding of a fresh molecule of 11-cis-retinal.

Its subcellular location is the membrane. The protein resides in the cell projection. It localises to the cilium. The protein localises to the photoreceptor outer segment. Functionally, photoreceptor required for image-forming vision at low light intensity. Required for photoreceptor cell viability after birth. Light-induced isomerization of 11-cis to all-trans retinal triggers a conformational change that activates signaling via G-proteins. Subsequent receptor phosphorylation mediates displacement of the bound G-protein alpha subunit by the arrestin SAG and terminates signaling. The sequence is that of Rhodopsin (RHO) from Oryctolagus cuniculus (Rabbit).